The chain runs to 40 residues: Photosystem II reaction center protein J (40 aa).

A helical membrane pass occupies residues 8-28 (IPLWLIGTVTGTLVIGLIGIF).

The protein belongs to the PsbJ family. In terms of assembly, PSII is composed of 1 copy each of membrane proteins PsbA, PsbB, PsbC, PsbD, PsbE, PsbF, PsbH, PsbI, PsbJ, PsbK, PsbL, PsbM, PsbT, PsbX, PsbY, PsbZ, Psb30/Ycf12, at least 3 peripheral proteins of the oxygen-evolving complex and a large number of cofactors. It forms dimeric complexes.

The protein localises to the plastid. Its subcellular location is the chloroplast thylakoid membrane. Functionally, one of the components of the core complex of photosystem II (PSII). PSII is a light-driven water:plastoquinone oxidoreductase that uses light energy to abstract electrons from H(2)O, generating O(2) and a proton gradient subsequently used for ATP formation. It consists of a core antenna complex that captures photons, and an electron transfer chain that converts photonic excitation into a charge separation. This chain is Photosystem II reaction center protein J, found in Cycas taitungensis (Prince sago).